Consider the following 110-residue polypeptide: Iron-sulfur cluster assembly protein CyaY (110 aa).

The protein belongs to the frataxin family.

Functionally, involved in iron-sulfur (Fe-S) cluster assembly. May act as a regulator of Fe-S biogenesis. This Pseudomonas putida (strain GB-1) protein is Iron-sulfur cluster assembly protein CyaY.